The primary structure comprises 138 residues: Small ribosomal subunit protein uS11c (138 aa).

Residues 1-22 (MAKAIPKISSRRNGRISSRKGA) form a disordered region. Over residues 9–22 (SSRRNGRISSRKGA) the composition is skewed to basic residues.

Belongs to the universal ribosomal protein uS11 family. As to quaternary structure, part of the 30S ribosomal subunit.

It is found in the plastid. The protein resides in the chloroplast. This Solanum bulbocastanum (Wild potato) protein is Small ribosomal subunit protein uS11c.